The chain runs to 57 residues: UPF0391 membrane protein RPA3029 (57 aa).

The next 2 helical transmembrane spans lie at 6-26 and 35-55; these read WALI…TGIS and ILFY…FTIF.

The protein belongs to the UPF0391 family.

Its subcellular location is the cell membrane. The polypeptide is UPF0391 membrane protein RPA3029 (Rhodopseudomonas palustris (strain ATCC BAA-98 / CGA009)).